Consider the following 115-residue polypeptide: MARVKRGNVARNRRNKILRLARGFQGSNGTLFRTANQRVMKALCNAYRDRRRRKRDFRRLWIARINAAARMNGVSYSRLIGGLKKADVRINRKMLAQLAVLDPSGFETVVAAAKS.

Belongs to the bacterial ribosomal protein bL20 family.

Binds directly to 23S ribosomal RNA and is necessary for the in vitro assembly process of the 50S ribosomal subunit. It is not involved in the protein synthesizing functions of that subunit. The chain is Large ribosomal subunit protein bL20 from Synechococcus sp. (strain RCC307).